The sequence spans 478 residues: Sulfate adenylyltransferase subunit 1 (478 aa).

Residues 24 to 240 (KSLLRFLTCG…VLENVDIDAD (217 aa)) enclose the tr-type G domain. The interval 33 to 40 (GSVDDGKS) is G1. 33–40 (GSVDDGKS) is a binding site for GTP. Residues 91-95 (GITID) form a G2 region. A G3 region spans residues 112–115 (DTPG). GTP is bound by residues 112–116 (DTPGH) and 167–170 (NKMD). A G4 region spans residues 167–170 (NKMD). Positions 206-208 (SAL) are G5.

Belongs to the TRAFAC class translation factor GTPase superfamily. Classic translation factor GTPase family. CysN/NodQ subfamily. Heterodimer composed of CysD, the smaller subunit, and CysN.

The enzyme catalyses sulfate + ATP + H(+) = adenosine 5'-phosphosulfate + diphosphate. It participates in sulfur metabolism; hydrogen sulfide biosynthesis; sulfite from sulfate: step 1/3. Its function is as follows. With CysD forms the ATP sulfurylase (ATPS) that catalyzes the adenylation of sulfate producing adenosine 5'-phosphosulfate (APS) and diphosphate, the first enzymatic step in sulfur assimilation pathway. APS synthesis involves the formation of a high-energy phosphoric-sulfuric acid anhydride bond driven by GTP hydrolysis by CysN coupled to ATP hydrolysis by CysD. This Aliivibrio fischeri (strain ATCC 700601 / ES114) (Vibrio fischeri) protein is Sulfate adenylyltransferase subunit 1.